The following is a 392-amino-acid chain: Multidrug resistance protein MdtL (392 aa).

12 helical membrane-spanning segments follow: residues 4 to 24 (FLLC…MYLV), 38 to 58 (AQLH…MLFA), 69 to 89 (PVAI…AQVH), 95 to 115 (LIGR…AFAI), 131 to 151 (LLNG…HLIM), 158 to 178 (SLFY…VFIL), 209 to 229 (LLIT…SPVL), 246 to 266 (ALMA…LSLF), 270 to 290 (TLML…SLAT), 294 to 314 (VTLI…GVAM), 331 to 351 (VLGI…AIIG), and 357 to 377 (MLIG…LVVT).

It belongs to the major facilitator superfamily. DHA1 family. MdtL (TC 2.A.1.2.22) subfamily.

It is found in the cell inner membrane. This chain is Multidrug resistance protein MdtL, found in Klebsiella pneumoniae subsp. pneumoniae (strain ATCC 700721 / MGH 78578).